Consider the following 635-residue polypeptide: 3-dehydroshikimate dehydratase (635 aa).

Positions 134, 165, 191, and 239 each coordinate a divalent metal cation. 2 VOC domains span residues 295–414 and 440–590; these read GVEF…LVEQ and RIDH…VYTE. 3 residues coordinate Mg(2+): His443, His521, and Glu599.

It belongs to the bacterial two-domain DSD family. As to quaternary structure, homodimer. The cofactor is Co(2+). Requires Ni(2+) as cofactor. Mg(2+) serves as cofactor. It depends on Mn(2+) as a cofactor.

The catalysed reaction is 3-dehydroshikimate = 3,4-dihydroxybenzoate + H2O. It participates in aromatic compound metabolism; 3,4-dihydroxybenzoate biosynthesis. Functionally, catalyzes the conversion of 3-dehydroshikimate to protocatechuate (3,4-dihydroxybenzoate), a common intermediate of quinate and shikimate degradation pathways. The chain is 3-dehydroshikimate dehydratase from Pseudomonas putida (strain ATCC 47054 / DSM 6125 / CFBP 8728 / NCIMB 11950 / KT2440).